A 289-amino-acid chain; its full sequence is Protoheme IX farnesyltransferase (289 aa).

9 helical membrane passes run 9 to 29 (VALMKLRVVELLLITTVPVMM), 35 to 55 (MPSLWLIAVTLVAGTLAAGSA), 89 to 109 (LTFGIVIGIVSTLMFGLLVNW), 110 to 130 (PSALLADGAIAFYVFVYTLGL), 138 to 158 (IVIGGAAGCFPVLIGWSAVTG), 164 to 184 (AVLLFAVVFFWTPPHFWALAM), 188 to 208 (DDYAAAGIPMLPVVAPVEVVT), 228 to 248 (VAHTGPVYLVSAVVVGAWFLA), and 269 to 289 (FHMSITYLTLLFVAIAVTAVV).

Belongs to the UbiA prenyltransferase family. Protoheme IX farnesyltransferase subfamily.

Its subcellular location is the cell membrane. The catalysed reaction is heme b + (2E,6E)-farnesyl diphosphate + H2O = Fe(II)-heme o + diphosphate. It functions in the pathway porphyrin-containing compound metabolism; heme O biosynthesis; heme O from protoheme: step 1/1. Functionally, converts heme B (protoheme IX) to heme O by substitution of the vinyl group on carbon 2 of heme B porphyrin ring with a hydroxyethyl farnesyl side group. This is Protoheme IX farnesyltransferase from Frankia alni (strain DSM 45986 / CECT 9034 / ACN14a).